The chain runs to 732 residues: E3 ubiquitin-protein ligase RNF19B (732 aa).

Residues 1–109 (MGSEKDSESP…PEEDEAAEGG (109 aa)) form a disordered region. Positions 1–315 (MGSEKDSESP…VCGCEFCWLC (315 aa)) are required for ubiquitin ligase activity and for protection against staurosporin-induced cell death. Over residues 54 to 71 (AEPPPPAAPPPPPPPAPA) the composition is skewed to pro residues. Over residues 72–99 (PVEAQAPPVEALPSEPAAEAEAEAVAAG) the composition is skewed to low complexity. Residues 100 to 109 (PEEDEAAEGG) show a composition bias toward acidic residues. The interval 112–334 (EEVECPLCLV…LSPSGCTFWG (223 aa)) is TRIAD supradomain. 14 residues coordinate Zn(2+): cysteine 116, cysteine 119, cysteine 139, cysteine 142, cysteine 203, cysteine 208, cysteine 225, cysteine 230, cysteine 235, cysteine 238, histidine 243, cysteine 248, cysteine 284, and cysteine 287. The RING-type 1 zinc finger occupies 116–165 (CPLCLVRLPPERAPRLLSCPHRSCRDCLRHYLRLEISESRVPISCPECSE). The IBR-type zinc finger occupies 183–248 (HKYEEFMLRR…KQIWHPNQTC (66 aa)). The RING-type 2; atypical zinc-finger motif lies at 284–315 (CPRCSAYIIKMNDGSCNHMTCAVCGCEFCWLC). Residue cysteine 299 is part of the active site. Residues cysteine 304, cysteine 307, cysteine 312, cysteine 315, histidine 323, and cysteine 330 each contribute to the Zn(2+) site. 2 consecutive transmembrane segments (helical) span residues 351–371 (LIGA…AMVI) and 412–432 (VIAA…VYGV). Disordered regions lie at residues 598–644 (QLVS…QSCE) and 660–732 (QPES…YEVE). Acidic residues predominate over residues 674–683 (QSDDVPDITS).

The protein belongs to the RBR family. RNF19 subfamily. As to quaternary structure, interacts with UBE2L3, UBE2L6 and UCKL1. As to expression, expressed specifically in natural killer cells, activated macrophages and cytotoxic T-cells. Present in macrophages (at protein level). Ubiquitously expressed with high expression in testis.

It is found in the cytoplasmic granule membrane. The protein resides in the endoplasmic reticulum membrane. It catalyses the reaction [E2 ubiquitin-conjugating enzyme]-S-ubiquitinyl-L-cysteine + [acceptor protein]-L-lysine = [E2 ubiquitin-conjugating enzyme]-L-cysteine + [acceptor protein]-N(6)-ubiquitinyl-L-lysine.. It functions in the pathway protein modification; protein ubiquitination. Its function is as follows. E3 ubiquitin-protein ligase which accepts ubiquitin from E2 ubiquitin-conjugating enzymes UBE2L3 and UBE2L6 in the form of a thioester and then directly transfers the ubiquitin to targeted substrates, such as UCKL1. Involved in the cytolytic activity of natural killer cells and cytotoxic T-cells. Protects against staurosporin-induced cell death. The protein is E3 ubiquitin-protein ligase RNF19B (Rnf19b) of Mus musculus (Mouse).